The primary structure comprises 105 residues: CRISPR-associated endoribonuclease Cas2 1 (105 aa).

D20 lines the Mg(2+) pocket.

Belongs to the CRISPR-associated endoribonuclease Cas2 protein family. In terms of assembly, homodimer, forms a heterotetramer with a Cas1 homodimer. It depends on Mg(2+) as a cofactor.

Functionally, CRISPR (clustered regularly interspaced short palindromic repeat), is an adaptive immune system that provides protection against mobile genetic elements (viruses, transposable elements and conjugative plasmids). CRISPR clusters contain sequences complementary to antecedent mobile elements and target invading nucleic acids. CRISPR clusters are transcribed and processed into CRISPR RNA (crRNA). Functions as a ssRNA-specific endoribonuclease. Involved in the integration of spacer DNA into the CRISPR cassette. The protein is CRISPR-associated endoribonuclease Cas2 1 (cas21) of Nitrosomonas europaea (strain ATCC 19718 / CIP 103999 / KCTC 2705 / NBRC 14298).